The sequence spans 603 residues: Methionine--tRNA ligase (603 aa).

The 'HIGH' region motif lies at 14–24 (PYANGPRHIGH). Residues C146, C149, C159, and C162 each coordinate Zn(2+). The 'KMSKS' region signature appears at 354–358 (KFSSS). Position 357 (S357) interacts with ATP.

Belongs to the class-I aminoacyl-tRNA synthetase family. MetG type 1 subfamily. Monomer. The cofactor is Zn(2+).

It localises to the cytoplasm. The enzyme catalyses tRNA(Met) + L-methionine + ATP = L-methionyl-tRNA(Met) + AMP + diphosphate. Is required not only for elongation of protein synthesis but also for the initiation of all mRNA translation through initiator tRNA(fMet) aminoacylation. This is Methionine--tRNA ligase from Salinispora tropica (strain ATCC BAA-916 / DSM 44818 / JCM 13857 / NBRC 105044 / CNB-440).